A 716-amino-acid chain; its full sequence is Phosphoribosylformylglycinamidine synthase subunit PurL (716 aa).

H34 is an active-site residue. Y37 provides a ligand contact to ATP. E78 contacts Mg(2+). Residues 79-82 (SHNH) and R101 contribute to the substrate site. H80 functions as the Proton acceptor in the catalytic mechanism. Residue D102 participates in Mg(2+) binding. Q226 is a binding site for substrate. D254 is a Mg(2+) binding site. 298 to 300 (ESQ) lines the substrate pocket. Residues D474 and G511 each coordinate ATP. N512 is a Mg(2+) binding site. Substrate is bound at residue S514.

The protein belongs to the FGAMS family. Monomer. Part of the FGAM synthase complex composed of 1 PurL, 1 PurQ and 2 PurS subunits.

It localises to the cytoplasm. It carries out the reaction N(2)-formyl-N(1)-(5-phospho-beta-D-ribosyl)glycinamide + L-glutamine + ATP + H2O = 2-formamido-N(1)-(5-O-phospho-beta-D-ribosyl)acetamidine + L-glutamate + ADP + phosphate + H(+). Its pathway is purine metabolism; IMP biosynthesis via de novo pathway; 5-amino-1-(5-phospho-D-ribosyl)imidazole from N(2)-formyl-N(1)-(5-phospho-D-ribosyl)glycinamide: step 1/2. Part of the phosphoribosylformylglycinamidine synthase complex involved in the purines biosynthetic pathway. Catalyzes the ATP-dependent conversion of formylglycinamide ribonucleotide (FGAR) and glutamine to yield formylglycinamidine ribonucleotide (FGAM) and glutamate. The FGAM synthase complex is composed of three subunits. PurQ produces an ammonia molecule by converting glutamine to glutamate. PurL transfers the ammonia molecule to FGAR to form FGAM in an ATP-dependent manner. PurS interacts with PurQ and PurL and is thought to assist in the transfer of the ammonia molecule from PurQ to PurL. In Methanobrevibacter smithii (strain ATCC 35061 / DSM 861 / OCM 144 / PS), this protein is Phosphoribosylformylglycinamidine synthase subunit PurL.